The following is a 2372-amino-acid chain: NBAS subunit of NRZ tethering complex (2372 aa).

2 WD repeats span residues 119–158 and 304–343; these read DPNP…LFII and GEQD…LRGS. The tract at residues 447-468 is disordered; it reads LESSVKGEEDDGDDDSDSDEEA. The segment covering 454–467 has biased composition (acidic residues); it reads EEDDGDDDSDSDEE. Positions 629 to 668 form a coiled coil; it reads YEDFLSMEEELEQRKERESKKRQELLKKVDFSKLTLEQKE.

The protein localises to the endoplasmic reticulum. In terms of biological role, involved in Golgi-to-endoplasmic reticulum (ER) retrograde transport; the function is proposed to depend on its association in the NRZ complex which is believed to play a role in SNARE assembly at the ER. Required for normal embryonic development. May play a role in the nonsense-mediated decay pathway of mRNAs containing premature stop codons. The polypeptide is NBAS subunit of NRZ tethering complex (Danio rerio (Zebrafish)).